The primary structure comprises 222 residues: ATP-dependent dethiobiotin synthetase BioD (222 aa).

Residue 12 to 17 (DVGKTI) coordinates ATP. Mg(2+) is bound at residue Thr16. Lys37 is a catalytic residue. Thr41 lines the substrate pocket. ATP-binding positions include Asp49, 107-110 (EGAG), 167-168 (GS), and 197-199 (AEG). 2 residues coordinate Mg(2+): Asp49 and Glu107.

It belongs to the dethiobiotin synthetase family. Homodimer. Mg(2+) is required as a cofactor.

It is found in the cytoplasm. It carries out the reaction (7R,8S)-7,8-diammoniononanoate + CO2 + ATP = (4R,5S)-dethiobiotin + ADP + phosphate + 3 H(+). It functions in the pathway cofactor biosynthesis; biotin biosynthesis; biotin from 7,8-diaminononanoate: step 1/2. Functionally, catalyzes a mechanistically unusual reaction, the ATP-dependent insertion of CO2 between the N7 and N8 nitrogen atoms of 7,8-diaminopelargonic acid (DAPA, also called 7,8-diammoniononanoate) to form a ureido ring. In Corynebacterium diphtheriae (strain ATCC 700971 / NCTC 13129 / Biotype gravis), this protein is ATP-dependent dethiobiotin synthetase BioD.